The following is a 471-amino-acid chain: 5-hydroxytryptamine receptor 2A (471 aa).

At 1-80 (MDILCEENTS…LQEKNWSALL (80 aa)) the chain is on the extracellular side. Asparagine 8, asparagine 38, asparagine 44, asparagine 51, and asparagine 54 each carry an N-linked (GlcNAc...) asparagine glycan. Residues 81-97 (TAVVIILTIAGNILVIM) traverse the membrane as a helical segment. Residues 98–111 (AVSLEKKLQNATNY) are Cytoplasmic-facing. Residues 112 to 137 (FLMSLAIADMLLGFLVMPVSMLTILY) traverse the membrane as a helical segment. The Extracellular portion of the chain corresponds to 138 to 146 (GYRWPLPSK). A helical membrane pass occupies residues 147 to 171 (LCAVWIYLDVLFSTASIMHLCAISL). An intrachain disulfide couples cysteine 148 to cysteine 227. Residue aspartate 155 participates in serotonin binding. The short motif at 172–174 (DRY) is the DRY motif; important for ligand-induced conformation changes element. Over 172–191 (DRYVAIQNPIHHSRFNSRTK) the chain is Cytoplasmic. The helical transmembrane segment at 192-215 (AFLKIIAVWTISVGISMPIPVFGL) threads the bilayer. Over 216–232 (QDDSKVFKEGSCLLADD) the chain is Extracellular. Residues 233–258 (NFVLIGSFVSFFIPLTIMVITYFLTI) form a helical membrane-spanning segment. Topologically, residues 259-322 (KSLQKEATLC…QSISNEQKAC (64 aa)) are cytoplasmic. Serine 280 bears the Phosphoserine mark. A helical transmembrane segment spans residues 323 to 348 (KVLGIVFFLFVVMWCPFFITNIMAVI). Residue asparagine 343 participates in serotonin binding. Cysteine 349 and cysteine 353 are joined by a disulfide. Residues 349–356 (CKESCNED) lie on the Extracellular side of the membrane. Residues 357-382 (VIGALLNVFVWIGYLSSAVNPLVYTL) traverse the membrane as a helical segment. Positions 376 to 380 (NPLVY) match the NPxxY motif; important for ligand-induced conformation changes and signaling motif. Residues 383-471 (FNKTYRSAFS…DGVNEKVSCV (89 aa)) lie on the Cytoplasmic side of the membrane. Over residues 451–465 (QHSEEASKDNSDGVN) the composition is skewed to basic and acidic residues. The disordered stretch occupies residues 451–471 (QHSEEASKDNSDGVNEKVSCV). The PDZ-binding motif lies at 469–471 (SCV).

This sequence belongs to the G-protein coupled receptor 1 family. In terms of assembly, interacts (via C-terminus) with MPDZ and PATJ. May interact (via C-terminus) with MPP3, PRDX6, DLG4, DLG1, CASK, APBA1 and MAGI2. Interacts with GRM2 and DRD2; this may affect signaling. In terms of tissue distribution, detected in brain cortex (at protein level). Detected in blood platelets.

Its subcellular location is the cell membrane. It is found in the cell projection. The protein localises to the dendrite. It localises to the axon. The protein resides in the cytoplasmic vesicle. Its subcellular location is the membrane. It is found in the caveola. The protein localises to the presynapse. Its activity is regulated as follows. G-protein coupled receptor activity is regulated by lipids: oleamide increases HTR2A-mediated activity. Inhibited by IHCH-7179 small molecule: IHCH-7179 acts both as an agonist activator for HTR1A and as an antagonist inhibitor for HTR2A. In terms of biological role, G-protein coupled receptor for 5-hydroxytryptamine (serotonin). Also functions as a receptor for various drugs and psychoactive substances, including mescaline, psilocybin, 1-(2,5-dimethoxy-4-iodophenyl)-2-aminopropane (DOI) and lysergic acid diethylamide (LSD). Ligand binding causes a conformation change that triggers signaling via guanine nucleotide-binding proteins (G proteins) and modulates the activity of downstream effectors. HTR2A is coupled to G(q)/G(11) G alpha proteins and activates phospholipase C-beta, releasing diacylglycerol (DAG) and inositol 1,4,5-trisphosphate (IP3) second messengers that modulate the activity of phosphatidylinositol 3-kinase and promote the release of Ca(2+) ions from intracellular stores, respectively. Beta-arrestin family members inhibit signaling via G proteins and mediate activation of alternative signaling pathways. Affects neural activity, perception, cognition and mood. Plays a role in the regulation of behavior, including responses to anxiogenic situations and psychoactive substances. Plays a role in intestinal smooth muscle contraction, and may play a role in arterial vasoconstriction. Its function is as follows. (Microbial infection) Acts as a receptor for human JC polyomavirus/JCPyV. The sequence is that of 5-hydroxytryptamine receptor 2A from Homo sapiens (Human).